The primary structure comprises 597 residues: DNA mismatch repair protein MutL (597 aa).

It belongs to the DNA mismatch repair MutL/HexB family.

In terms of biological role, this protein is involved in the repair of mismatches in DNA. It is required for dam-dependent methyl-directed DNA mismatch repair. May act as a 'molecular matchmaker', a protein that promotes the formation of a stable complex between two or more DNA-binding proteins in an ATP-dependent manner without itself being part of a final effector complex. The protein is DNA mismatch repair protein MutL of Rhodopseudomonas palustris (strain BisB5).